A 400-amino-acid polypeptide reads, in one-letter code: MRVAGIIVEYNPFHNGHLYHLQKTREITNADIVVGVMSGNFIQRGEPAIVNKWARTKMAILNGVDVIFELPFAYACNSAEIFAYGAISILNQLGVDFIVFGSECGDIDKLKETAKHLAFEEDDFKSSLKSYLKEGYSFPKARELALIKTCKTNIEFSSNNILGIEYIKWIYRLNSKIEPFTIRRIGASYNDPNLTQDTYASATAIRRNINNLHAIKNKMPSVSYEILLEEFESGRGPVILEDYFKLFIYNAIVVPDFLKNKIDVKEGLENRFEKYIFNSPSAKNLLENVKTKRYTLTRLQRIFIHAIVRNNFDQKALLSITPYVRVLGFNYKGKEYLNKIKDKIEYITKLNQQWLKNPQYKELLELEIRSSMLHALQYKDFHKYLQTEFKSSPIYISSRS.

ATP contacts are provided by residues 7-20 (IVEY…HLYH), Gly101, Asn159, and 184-185 (RI).

Belongs to the TmcAL family.

It localises to the cytoplasm. It carries out the reaction cytidine(34) in elongator tRNA(Met) + acetate + ATP = N(4)-acetylcytidine(34) in elongator tRNA(Met) + AMP + diphosphate. In terms of biological role, catalyzes the formation of N(4)-acetylcytidine (ac(4)C) at the wobble position of elongator tRNA(Met), using acetate and ATP as substrates. First activates an acetate ion to form acetyladenylate (Ac-AMP) and then transfers the acetyl group to tRNA to form ac(4)C34. This Caldicellulosiruptor bescii (strain ATCC BAA-1888 / DSM 6725 / KCTC 15123 / Z-1320) (Anaerocellum thermophilum) protein is tRNA(Met) cytidine acetate ligase.